The sequence spans 568 residues: Peptidoglycan D,D-transpeptidase FtsI (568 aa).

A helical transmembrane segment spans residues 19–39 (FVTLCSIVFLFLVILTLRIIF). The active-site Acyl-ester intermediate is S302.

It belongs to the transpeptidase family. FtsI subfamily.

It localises to the cell inner membrane. The enzyme catalyses Preferential cleavage: (Ac)2-L-Lys-D-Ala-|-D-Ala. Also transpeptidation of peptidyl-alanyl moieties that are N-acyl substituents of D-alanine.. It participates in cell wall biogenesis; peptidoglycan biosynthesis. Functionally, catalyzes cross-linking of the peptidoglycan cell wall at the division septum. This chain is Peptidoglycan D,D-transpeptidase FtsI, found in Buchnera aphidicola subsp. Schizaphis graminum (strain Sg).